Here is a 141-residue protein sequence, read N- to C-terminus: Drosulfakinins (141 aa).

The first 31 residues, Met-1–Ala-31, serve as a signal peptide directing secretion. Positions Gln-32 to Asp-73 are excised as a propeptide. Position 82 is a phenylalanine amide (Phe-82). Positions Val-86–Ala-111 are excised as a propeptide. A Sulfotyrosine modification is found at Tyr-117. Phenylalanine amide is present on Phe-122. The residue at position 134 (Tyr-134) is a Sulfotyrosine. Phe-139 is modified (phenylalanine amide).

The protein belongs to the gastrin/cholecystokinin family.

The protein resides in the secreted. Functionally, drosulfakinin-0 (DSK 0) plays diverse biological roles including regulating gut muscle contraction in adults but not in larvae. The polypeptide is Drosulfakinins (Drosophila simulans (Fruit fly)).